Consider the following 138-residue polypeptide: Superoxide dismutase [Mn] (138 aa).

Positions 1, 49, 133, and 137 each coordinate Mn(2+).

Belongs to the iron/manganese superoxide dismutase family. Mn(2+) is required as a cofactor.

The catalysed reaction is 2 superoxide + 2 H(+) = H2O2 + O2. Its function is as follows. Destroys superoxide anion radicals which are normally produced within the cells and which are toxic to biological systems. This is Superoxide dismutase [Mn] (sodA) from Mycobacterium celatum.